Here is a 216-residue protein sequence, read N- to C-terminus: CsgBAC operon transcriptional regulatory protein (216 aa).

The 66-residue stretch at 149–214 (NSTESALLTH…QAVSWANDNL (66 aa)) folds into the HTH luxR-type domain. Residues 173–192 (NNEIARSLFISENTVKTHLY) constitute a DNA-binding region (H-T-H motif).

Its subcellular location is the cell inner membrane. The master regulator for adhesive curli fimbriae expression; necessary for transcription of the csgBAC/ymdA operon. Plays a positive role in biofilm formation. May have the capability to respond to starvation and/or high cell density by activating csgBA transcription. Low-level constitutive expression confers an adherent curli fimbriae-expressing phenotype, up-regulates 10 genes and down-regulates 14 others. This chain is CsgBAC operon transcriptional regulatory protein (csgD), found in Escherichia coli (strain K12).